Reading from the N-terminus, the 113-residue chain is U-scoloptoxin(16)-Sa1a (113 aa).

An N-terminal signal peptide occupies residues Met-1–Ala-29.

Belongs to the scoloptoxin-16 family. Contains 4 disulfide bonds. Expressed by the venom gland.

It localises to the secreted. The chain is U-scoloptoxin(16)-Sa1a from Scolopendra alternans (Florida Keys giant centipede).